The following is a 525-amino-acid chain: GMP synthase [glutamine-hydrolyzing] (525 aa).

The 199-residue stretch at 9 to 207 (RILILDFGSQ…VRDICQCEAL (199 aa)) folds into the Glutamine amidotransferase type-1 domain. Residue Cys-86 is the Nucleophile of the active site. Active-site residues include His-181 and Glu-183. The GMPS ATP-PPase domain maps to 208–400 (WTPAKIIDDA…LGLPYDMLYR (193 aa)). 235–241 (SGGVDSS) is an ATP binding site.

As to quaternary structure, homodimer.

The enzyme catalyses XMP + L-glutamine + ATP + H2O = GMP + L-glutamate + AMP + diphosphate + 2 H(+). Its pathway is purine metabolism; GMP biosynthesis; GMP from XMP (L-Gln route): step 1/1. In terms of biological role, catalyzes the synthesis of GMP from XMP. This Escherichia fergusonii (strain ATCC 35469 / DSM 13698 / CCUG 18766 / IAM 14443 / JCM 21226 / LMG 7866 / NBRC 102419 / NCTC 12128 / CDC 0568-73) protein is GMP synthase [glutamine-hydrolyzing].